The chain runs to 339 residues: Phosphate acyltransferase (339 aa).

The protein belongs to the PlsX family. As to quaternary structure, homodimer. Probably interacts with PlsY.

Its subcellular location is the cytoplasm. It catalyses the reaction a fatty acyl-[ACP] + phosphate = an acyl phosphate + holo-[ACP]. It functions in the pathway lipid metabolism; phospholipid metabolism. Its function is as follows. Catalyzes the reversible formation of acyl-phosphate (acyl-PO(4)) from acyl-[acyl-carrier-protein] (acyl-ACP). This enzyme utilizes acyl-ACP as fatty acyl donor, but not acyl-CoA. This chain is Phosphate acyltransferase, found in Helicobacter pylori (strain Shi470).